Consider the following 76-residue polypeptide: Sec-independent protein translocase protein TatA (76 aa).

The helical transmembrane segment at 1–21 threads the bilayer; that stretch reads MGGLSIWHWLIVLLIVALVFG. Residues 40 to 76 form a disordered region; the sequence is KDGMKEGETPADAQQLPRTGTVDVNAKETTRSDSNKA. Basic and acidic residues predominate over residues 64–76; the sequence is NAKETTRSDSNKA.

It belongs to the TatA/E family. As to quaternary structure, the Tat system comprises two distinct complexes: a TatABC complex, containing multiple copies of TatA, TatB and TatC subunits, and a separate TatA complex, containing only TatA subunits. Substrates initially bind to the TatABC complex, which probably triggers association of the separate TatA complex to form the active translocon.

The protein localises to the cell inner membrane. Part of the twin-arginine translocation (Tat) system that transports large folded proteins containing a characteristic twin-arginine motif in their signal peptide across membranes. TatA could form the protein-conducting channel of the Tat system. In Burkholderia ambifaria (strain MC40-6), this protein is Sec-independent protein translocase protein TatA.